A 450-amino-acid polypeptide reads, in one-letter code: ATP-dependent protease ATPase subunit HslU (450 aa).

ATP contacts are provided by residues Val29, Gly71 to Glu76, Asp261, Glu328, and Arg400.

This sequence belongs to the ClpX chaperone family. HslU subfamily. As to quaternary structure, a double ring-shaped homohexamer of HslV is capped on each side by a ring-shaped HslU homohexamer. The assembly of the HslU/HslV complex is dependent on binding of ATP.

The protein localises to the cytoplasm. Functionally, ATPase subunit of a proteasome-like degradation complex; this subunit has chaperone activity. The binding of ATP and its subsequent hydrolysis by HslU are essential for unfolding of protein substrates subsequently hydrolyzed by HslV. HslU recognizes the N-terminal part of its protein substrates and unfolds these before they are guided to HslV for hydrolysis. The protein is ATP-dependent protease ATPase subunit HslU of Rickettsia felis (strain ATCC VR-1525 / URRWXCal2) (Rickettsia azadi).